The following is a 252-amino-acid chain: MLAKRIIPCLDVKEGRVVKGVNFIGLQDVGDPVEIAALYNDAGADEIVFLDITATHEGRKTIIDVVEKTASKVFIPLTVGGGISSVKDMYNLLRAGADKVSINSAAVRNPKLIEEGAEHFGSQCIVVAIDARKVAEDKWNVYVNGGRVDTGIDAIGWAKCVTELGAGEILLTSMDADGTKNGYDLRLTEEISKSVSVPVIASGGCGHANHIIEVFQKTTVDAALAASIFHYGEATIGDVKRKLRNANVEVRL.

Active-site residues include Asp-11 and Asp-130.

It belongs to the HisA/HisF family. Heterodimer of HisH and HisF.

It localises to the cytoplasm. It carries out the reaction 5-[(5-phospho-1-deoxy-D-ribulos-1-ylimino)methylamino]-1-(5-phospho-beta-D-ribosyl)imidazole-4-carboxamide + L-glutamine = D-erythro-1-(imidazol-4-yl)glycerol 3-phosphate + 5-amino-1-(5-phospho-beta-D-ribosyl)imidazole-4-carboxamide + L-glutamate + H(+). Its pathway is amino-acid biosynthesis; L-histidine biosynthesis; L-histidine from 5-phospho-alpha-D-ribose 1-diphosphate: step 5/9. Its function is as follows. IGPS catalyzes the conversion of PRFAR and glutamine to IGP, AICAR and glutamate. The HisF subunit catalyzes the cyclization activity that produces IGP and AICAR from PRFAR using the ammonia provided by the HisH subunit. The protein is Imidazole glycerol phosphate synthase subunit HisF of Bacillus cereus (strain AH187).